The following is a 127-amino-acid chain: Large ribosomal subunit protein bL17 (127 aa).

This sequence belongs to the bacterial ribosomal protein bL17 family. As to quaternary structure, part of the 50S ribosomal subunit. Contacts protein L32.

This chain is Large ribosomal subunit protein bL17, found in Leuconostoc citreum (strain KM20).